Here is a 270-residue protein sequence, read N- to C-terminus: 3-methyl-2-oxobutanoate hydroxymethyltransferase (270 aa).

D48 and D87 together coordinate Mg(2+). 3-methyl-2-oxobutanoate-binding positions include 48 to 49, D87, and K117; that span reads DS. E119 contacts Mg(2+). The Proton acceptor role is filled by E186.

The protein belongs to the PanB family. As to quaternary structure, homodecamer; pentamer of dimers. The cofactor is Mg(2+).

It is found in the cytoplasm. The enzyme catalyses 3-methyl-2-oxobutanoate + (6R)-5,10-methylene-5,6,7,8-tetrahydrofolate + H2O = 2-dehydropantoate + (6S)-5,6,7,8-tetrahydrofolate. Its pathway is cofactor biosynthesis; (R)-pantothenate biosynthesis; (R)-pantoate from 3-methyl-2-oxobutanoate: step 1/2. In terms of biological role, catalyzes the reversible reaction in which hydroxymethyl group from 5,10-methylenetetrahydrofolate is transferred onto alpha-ketoisovalerate to form ketopantoate. This is 3-methyl-2-oxobutanoate hydroxymethyltransferase from Synechococcus sp. (strain RCC307).